Consider the following 533-residue polypeptide: Flavin-containing monooxygenase 5 (533 aa).

The residue at position 5 (arginine 5) is a Dimethylated arginine. Residues 10–14 (GAGAS), glutamate 33, and 41–42 (LW) contribute to the FAD site. Serine 54 carries the phosphoserine modification. A Phosphotyrosine modification is found at tyrosine 56. Phosphoserine is present on serine 58. Residue 62–63 (NT) coordinates FAD. 196 to 199 (SGGD) contacts NADP(+). Serine 280 bears the Phosphoserine mark. Residue threonine 284 is modified to Phosphothreonine. The residue at position 401 (serine 401) is a Phosphoserine. Residues 513 to 533 (MMTMGKFMLAIAFLAIAVVYF) form a helical membrane-spanning segment.

Belongs to the FMO family. FAD serves as cofactor. In terms of tissue distribution, kidney and liver.

It is found in the microsome membrane. The protein localises to the endoplasmic reticulum membrane. It catalyses the reaction N,N-dimethylaniline + NADPH + O2 + H(+) = N,N-dimethylaniline N-oxide + NADP(+) + H2O. The enzyme catalyses NADPH + O2 + H(+) = H2O2 + NADP(+). The catalysed reaction is heptan-2-one + NADPH + O2 + H(+) = pentyl acetate + NADP(+) + H2O. It carries out the reaction octan-3-one + NADPH + O2 + H(+) = pentyl propanoate + NADP(+) + H2O. It catalyses the reaction octan-3-one + NADPH + O2 + H(+) = ethyl hexanoate + NADP(+) + H2O. The enzyme catalyses hexan-3-one + NADPH + O2 + H(+) = ethyl butanoate + NADP(+) + H2O. The catalysed reaction is hexan-3-one + NADPH + O2 + H(+) = propyl propanoate + NADP(+) + H2O. It carries out the reaction heptan-4-one + NADPH + O2 + H(+) = propyl butanoate + NADP(+) + H2O. It catalyses the reaction (2E)-geranial + NADPH + O2 + H(+) = (1E)-2,6-dimethylhepta-1,5-dien-1-yl formate + NADP(+) + H2O. The enzyme catalyses sulcatone + NADPH + O2 + H(+) = 4-methylpent-3-en-1-yl acetate + NADP(+) + H2O. Its function is as follows. Acts as a Baeyer-Villiger monooxygenase on a broad range of substrates. Catalyzes the insertion of an oxygen atom into a carbon-carbon bond adjacent to a carbonyl, which converts ketones to esters. Active on diverse carbonyl compounds, whereas soft nucleophiles are mostly non- or poorly reactive. In contrast with other forms of FMO it is non- or poorly active on 'classical' substrates such as drugs, pesticides, and dietary components containing soft nucleophilic heteroatoms. Able to oxidize drug molecules bearing a carbonyl group on an aliphatic chain, such as nabumetone and pentoxifylline. Also, in the absence of substrates, shows slow but yet significant NADPH oxidase activity. Acts as a positive modulator of cholesterol biosynthesis as well as glucose homeostasis, promoting metabolic aging via pleiotropic effects. This chain is Flavin-containing monooxygenase 5 (FMO5), found in Oryctolagus cuniculus (Rabbit).